An 883-amino-acid chain; its full sequence is MHPFSRLFRNIQSLEEEVQELLGPPEDALPLLAGEDLNHRVADALNLHLPTADLQWVHKTNAITGLYSNQAAQFNPNWIQPEFPELHLHNDLIQKLQQYFGPLTINEKRKLQLNFPARFFPKATKYFPLIKGIKNHYPNFALEHFFATANYLWTLWEAGILYLRKNQTTLTFKGKPYSWEHRQLVQHNGQQHKSHLQSRQNSSMVACSGHLLHNHLSSESVSVSTRNLSNNISDKSQKSTRTGLCSYKQIQTDRLEHLARISCGSKIFIGQQGSSPKTLYKSISSNFRNQTWAYNSSRNSGHTTWFSSASNSNKSRSREKAYSSNSTSKRYSPPLNYEKSDFSSPGVRRRITRLDNNGTPTQCLSRSFYNTKPCGSYCIHHIVSSLDDWGPCTVTGDVTIKSPRTPRRITGGVFLVDKNPNNSSESRLVVHFSQFSRGHTRVHWPKFAVPNLQTLANLLSTNLQWLSLDVSAAFYHIPISPAAVPHLLVGSPGLERFNTCLSSSTHNRNNSQLQTMHNLCTRHVYSSLLLLFKTYGRKLHLLAHPFIMGFRKLPMGVGLSSSLLAQFTSALASMVRRNFPHCVVFAYMDDLVLGARTSEHLTAIYSHICSVFLDLGIHLNVNKTKWWGNHLHFMGYVITSSGVLPQDKHVKKISRYLLSVPVNQPLDYKISERLTGILNYVAPFTLCGYAALMPLYHAIASRMAFIFSSLYKSWLLSLYEELWPVVRQRGVVCTVFADATPTGWGIATTCQLLSGTYAFPLPIATAELIAACLARCWTGARLLGTDNSVVLSGKLTSFPWLLACVATWILRGTSFCYVPSALNPADLPSRGLLPALRPLPRLRLRPQTTRISLWAASPPVSPRAPVRVAWSSPVQTCEPWIPP.

The segment at 1-183 is terminal protein domain (TP); the sequence is MHPFSRLFRN…GKPYSWEHRQ (183 aa). The spacer stretch occupies residues 184-386; it reads LVQHNGQQHK…YCIHHIVSSL (203 aa). Residues 298–344 are disordered; that stretch reads RNSGHTTWFSSASNSNKSRSREKAYSSNSTSKRYSPPLNYEKSDFSS. A polymerase/reverse transcriptase domain (RT) region spans residues 387-728; it reads DDWGPCTVTG…YEELWPVVRQ (342 aa). The 242-residue stretch at 397–638 folds into the Reverse transcriptase domain; that stretch reads DVTIKSPRTP…NHLHFMGYVI (242 aa). D469, D589, and D590 together coordinate Mg(2+).

This sequence belongs to the hepadnaviridae P protein family.

The catalysed reaction is DNA(n) + a 2'-deoxyribonucleoside 5'-triphosphate = DNA(n+1) + diphosphate. It carries out the reaction Endonucleolytic cleavage to 5'-phosphomonoester.. Activated by host HSP70 and HSP40 in vitro to be able to bind the epsilon loop of the pgRNA. Because deletion of the RNase H region renders the protein partly chaperone-independent, the chaperones may be needed indirectly to relieve occlusion of the RNA-binding site by this domain. Inhibited by several reverse-transcriptase inhibitors: Lamivudine, Adefovir and Entecavir. Multifunctional enzyme that converts the viral RNA genome into dsDNA in viral cytoplasmic capsids. This enzyme displays a DNA polymerase activity that can copy either DNA or RNA templates, and a ribonuclease H (RNase H) activity that cleaves the RNA strand of RNA-DNA heteroduplexes in a partially processive 3'- to 5'-endonucleasic mode. Neo-synthesized pregenomic RNA (pgRNA) are encapsidated together with the P protein, and reverse-transcribed inside the nucleocapsid. Initiation of reverse-transcription occurs first by binding the epsilon loop on the pgRNA genome, and is initiated by protein priming, thereby the 5'-end of (-)DNA is covalently linked to P protein. Partial (+)DNA is synthesized from the (-)DNA template and generates the relaxed circular DNA (RC-DNA) genome. After budding and infection, the RC-DNA migrates in the nucleus, and is converted into a plasmid-like covalently closed circular DNA (cccDNA). The activity of P protein does not seem to be necessary for cccDNA generation, and is presumably released from (+)DNA by host nuclear DNA repair machinery. In Woodchuck hepatitis B virus (isolate 2) (WHV), this protein is Protein P.